The sequence spans 134 residues: Large ribosomal subunit protein bL17 (134 aa).

It belongs to the bacterial ribosomal protein bL17 family. In terms of assembly, part of the 50S ribosomal subunit. Contacts protein L32.

This chain is Large ribosomal subunit protein bL17, found in Paracidovorax citrulli (strain AAC00-1) (Acidovorax citrulli).